The chain runs to 163 residues: UPF0262 protein RPC_4416 (163 aa).

This sequence belongs to the UPF0262 family.

This chain is UPF0262 protein RPC_4416, found in Rhodopseudomonas palustris (strain BisB18).